The sequence spans 120 residues: NAD(P)H-quinone oxidoreductase subunit 3, chloroplastic (120 aa).

A run of 3 helical transmembrane segments spans residues 9–29 (IFWA…TISG), 64–84 (MFAL…PWAM), and 88–108 (VLGI…IVGS).

This sequence belongs to the complex I subunit 3 family. As to quaternary structure, NDH is composed of at least 16 different subunits, 5 of which are encoded in the nucleus.

Its subcellular location is the plastid. The protein localises to the chloroplast thylakoid membrane. It catalyses the reaction a plastoquinone + NADH + (n+1) H(+)(in) = a plastoquinol + NAD(+) + n H(+)(out). The enzyme catalyses a plastoquinone + NADPH + (n+1) H(+)(in) = a plastoquinol + NADP(+) + n H(+)(out). NDH shuttles electrons from NAD(P)H:plastoquinone, via FMN and iron-sulfur (Fe-S) centers, to quinones in the photosynthetic chain and possibly in a chloroplast respiratory chain. The immediate electron acceptor for the enzyme in this species is believed to be plastoquinone. Couples the redox reaction to proton translocation, and thus conserves the redox energy in a proton gradient. In Lotus japonicus (Lotus corniculatus var. japonicus), this protein is NAD(P)H-quinone oxidoreductase subunit 3, chloroplastic.